The chain runs to 196 residues: HTH-type transcriptional regulator EcpR (196 aa).

The HTH luxR-type domain maps to 138–196; that stretch reads KDIKKDKITDREMEIIRMTAQGMLPKSIARIENCSVKTVYTHRRNAEAKLYSKIYKLVP. Positions 162 to 181 form a DNA-binding region, H-T-H motif; it reads PKSIARIENCSVKTVYTHRR.

It belongs to the EcpR/MatA family.

The protein resides in the cytoplasm. Functionally, part of the ecpRABCDE operon, which encodes the E.coli common pilus (ECP). ECP is found in both commensal and pathogenic strains and plays a dual role in early-stage biofilm development and host cell recognition. Positively regulates the expression of the ecp operon. This Escherichia coli O17:K52:H18 (strain UMN026 / ExPEC) protein is HTH-type transcriptional regulator EcpR (ecpR).